Reading from the N-terminus, the 467-residue chain is Proton extrusion protein PxcA (467 aa).

Residues 183–205 (TSPPQLIRPRTEQNKKPRGKADT) are disordered. The segment covering 191–203 (PRTEQNKKPRGKA) has biased composition (basic and acidic residues). Helical transmembrane passes span 249-269 (FILLLIIVPLLTHQLSKALIV), 352-372 (IFSVGAFIWLLLVSKPSIMVL), 391-411 (IIILFTDVFVGFHSPHGWEVI), and 427-447 (FIFLFIATFPVILDTIFKYWI).

Belongs to the CemA family.

The protein resides in the cell inner membrane. Its function is as follows. Required for H(+) efflux immediately after light irradiation to form a rapid H(+) concentration gradient across the thylakoid membranes. Together with PxcL, contributes to transient H(+) uptake following dark to light transition. This Trichormus variabilis (strain ATCC 29413 / PCC 7937) (Anabaena variabilis) protein is Proton extrusion protein PxcA.